Consider the following 84-residue polypeptide: Small ribosomal subunit protein uS17 (84 aa).

This sequence belongs to the universal ribosomal protein uS17 family. As to quaternary structure, part of the 30S ribosomal subunit.

Functionally, one of the primary rRNA binding proteins, it binds specifically to the 5'-end of 16S ribosomal RNA. The polypeptide is Small ribosomal subunit protein uS17 (Clostridium novyi (strain NT)).